A 387-amino-acid chain; its full sequence is EARP-interacting protein homolog (387 aa).

WD repeat units lie at residues 132 to 172 (SAHG…AKAT), 182 to 222 (KGQL…QIYC), 226 to 266 (AHGQ…EPVK), and 270 to 310 (EHSH…SEPF). Residues 309 to 337 (PFGHLVDDDDLSDPEENQQEDKGKEPLQD) are disordered. Positions 315–326 (DDDDLSDPEENQ) are enriched in acidic residues. A WD 5 repeat occupies 345 to 385 (EHEDSVYAVEWSAADPWLFASLSYDGRLVINRVPRALKYRI).

This sequence belongs to the WD repeat EIPR1 family.

Its subcellular location is the golgi apparatus. The protein resides in the trans-Golgi network. Functionally, may act as a component of endosomal retrieval machinery that is involved in protein transport from early endosomes to either recycling endosomes or the trans-Golgi network. In Danio rerio (Zebrafish), this protein is EARP-interacting protein homolog.